We begin with the raw amino-acid sequence, 448 residues long: Probable glycine dehydrogenase (decarboxylating) subunit 1 (448 aa).

The protein belongs to the GcvP family. N-terminal subunit subfamily. In terms of assembly, the glycine cleavage system is composed of four proteins: P, T, L and H. In this organism, the P 'protein' is a heterodimer of two subunits.

The enzyme catalyses N(6)-[(R)-lipoyl]-L-lysyl-[glycine-cleavage complex H protein] + glycine + H(+) = N(6)-[(R)-S(8)-aminomethyldihydrolipoyl]-L-lysyl-[glycine-cleavage complex H protein] + CO2. Functionally, the glycine cleavage system catalyzes the degradation of glycine. The P protein binds the alpha-amino group of glycine through its pyridoxal phosphate cofactor; CO(2) is released and the remaining methylamine moiety is then transferred to the lipoamide cofactor of the H protein. The protein is Probable glycine dehydrogenase (decarboxylating) subunit 1 of Bacillus licheniformis (strain ATCC 14580 / DSM 13 / JCM 2505 / CCUG 7422 / NBRC 12200 / NCIMB 9375 / NCTC 10341 / NRRL NRS-1264 / Gibson 46).